Reading from the N-terminus, the 55-residue chain is Lantibiotic nisin-U (55 aa).

Residues 1–24 constitute a propeptide that is removed on maturation; it reads MNNEDFNLDLIKISKENNSGASPR. T26 carries the 2,3-didehydrobutyrine modification. A cross-link (lanthionine (Ser-Cys)) is located at residues 27–31; it reads SKSLC. S29 is modified (2,3-didehydroalanine (Ser)). Cross-links (beta-methyllanthionine (Thr-Cys)) lie at residues 32–35, 37–43, 47–50, and 49–52; these read TPGC, TGILMTC, TATC, and TCGC. T42 is modified (2,3-didehydrobutyrine).

In terms of processing, maturation of lantibiotics involves the enzymatic conversion of Thr, and Ser into dehydrated AA and the formation of thioether bonds with cysteine. This is followed by membrane translocation and cleavage of the modified precursor.

It is found in the secreted. Its function is as follows. Lanthionine-containing peptide antibiotic (lantibiotic) active on Gram-positive bacteria. The bactericidal activity of lantibiotics is based on depolarization of energized bacterial cytoplasmic membranes, initiated by the formation of aqueous transmembrane pores. This Streptococcus uberis protein is Lantibiotic nisin-U (nsuA).